The primary structure comprises 1252 residues: Plasma membrane calcium-transporting ATPase mca-1 (1252 aa).

The Cytoplasmic portion of the chain corresponds to 1–121; sequence MQKSQNVTAV…VRLVLDACKD (121 aa). Residues 122-142 form a helical membrane-spanning segment; it reads PTLVILVLSGFINLALSFYEP. Residues 143 to 180 are Extracellular-facing; the sequence is TSAAEDATQHLVNATTAAILANGTFMSTTEAPSEGHGT. N-linked (GlcNAc...) asparagine glycosylation is found at N155 and N164. A helical membrane pass occupies residues 181–201; that stretch reads AWIEGVAILLCVIVVVLVTAV. Residues 202–376 lie on the Cytoplasmic side of the membrane; sequence NDYSKERQFR…KSVLQAKLSK (175 aa). The disordered stretch occupies residues 330-361; it reads DDSTSTSSSSSSSSSSSGSSSNGSSDSSKSGD. Residues 333-357 are compositionally biased toward low complexity; the sequence is TSTSSSSSSSSSSSGSSSNGSSDSS. Residues 377 to 397 traverse the membrane as a helical segment; it reads LALQIIYCGTTIAIIALIVLV. The Extracellular segment spans residues 398-422; the sequence is TRFCLDHYVFEKNEFSLVDIQMFVK. The chain crosses the membrane as a helical span at residues 423–443; the sequence is FFIIAVTILVISIPEGLPLAI. Residues V432, I435, and E437 each contribute to the Ca(2+) site. At 444 to 879 the chain is on the cytoplasmic side; sequence ALALTYSVRK…GRNVYDSISK (436 aa). Catalysis depends on D479, which acts as the 4-aspartylphosphate intermediate. Mg(2+) is bound by residues D479 and T481. Residues T481, E553, K612, T733, G734, D735, R792, and K798 each coordinate ATP. D822 is a binding site for Mg(2+). Residue N825 coordinates ATP. The chain crosses the membrane as a helical span at residues 880–900; sequence FLQFQLTVNVVAVITAFVGAV. N888 is a binding site for Ca(2+). Over 901–908 the chain is Extracellular; the sequence is TVSDSPLK. Residues 909-929 traverse the membrane as a helical segment; the sequence is AVHMLWINLIMDTLASLALAT. N916 and D920 together coordinate Ca(2+). At 930-960 the chain is on the cytoplasmic side; it reads EQPTDELLERKPYGRKKSLISRTMVKNILCH. Residues 961-981 traverse the membrane as a helical segment; sequence ALYQLIIIFVIFFYGDTIFGI. At 982–989 the chain is on the extracellular side; sequence KTGLYAPL. The helical transmembrane segment at 990 to 1010 threads the bilayer; the sequence is FAPPSQHFTLVFNAFVMMTVF. Residues 1011–1035 lie on the Cytoplasmic side of the membrane; the sequence is NEINARKVHGERNVFKGLASNRVFC. A helical transmembrane segment spans residues 1036 to 1056; it reads VIWVTTFIAQIIIVQFGGAWF. The Extracellular segment spans residues 1057–1065; the sequence is STAPLTLQQ. A helical transmembrane segment spans residues 1066–1086; it reads WIVCLVLGFSTLIWGQIVATI. Residues 1087–1252 are Cytoplasmic-facing; sequence PSKKLPKAWK…NVDMEDIELN (166 aa). A calmodulin-binding subdomain A region spans residues 1124 to 1142; it reads LRRSGKSLWVRGMFIIGNH. The tract at residues 1143–1152 is calmodulin-binding subdomain B; it reads LRVLRAFGME. The disordered stretch occupies residues 1181-1252; the sequence is YRHQKHQEKK…NVDMEDIELN (72 aa).

The protein belongs to the cation transport ATPase (P-type) (TC 3.A.3) family. Type IIB subfamily. In terms of assembly, interacts with calmodulin.

The protein resides in the cell membrane. It catalyses the reaction Ca(2+)(in) + ATP + H2O = Ca(2+)(out) + ADP + phosphate + H(+). Functionally, catalyzes the hydrolysis of ATP coupled with the transport of calcium across a membrane. This chain is Plasma membrane calcium-transporting ATPase mca-1, found in Caenorhabditis elegans.